We begin with the raw amino-acid sequence, 337 residues long: Tetraacyldisaccharide 4'-kinase (337 aa).

51-58 (HVGGAGKT) is a binding site for ATP.

This sequence belongs to the LpxK family.

It carries out the reaction a lipid A disaccharide + ATP = a lipid IVA + ADP + H(+). Its pathway is glycolipid biosynthesis; lipid IV(A) biosynthesis; lipid IV(A) from (3R)-3-hydroxytetradecanoyl-[acyl-carrier-protein] and UDP-N-acetyl-alpha-D-glucosamine: step 6/6. Transfers the gamma-phosphate of ATP to the 4'-position of a tetraacyldisaccharide 1-phosphate intermediate (termed DS-1-P) to form tetraacyldisaccharide 1,4'-bis-phosphate (lipid IVA). The polypeptide is Tetraacyldisaccharide 4'-kinase (Afipia carboxidovorans (strain ATCC 49405 / DSM 1227 / KCTC 32145 / OM5) (Oligotropha carboxidovorans)).